The sequence spans 482 residues: Exodeoxyribonuclease 7 large subunit (482 aa).

The segment at T457 to F482 is disordered.

This sequence belongs to the XseA family. Heterooligomer composed of large and small subunits.

Its subcellular location is the cytoplasm. The enzyme catalyses Exonucleolytic cleavage in either 5'- to 3'- or 3'- to 5'-direction to yield nucleoside 5'-phosphates.. Functionally, bidirectionally degrades single-stranded DNA into large acid-insoluble oligonucleotides, which are then degraded further into small acid-soluble oligonucleotides. The chain is Exodeoxyribonuclease 7 large subunit from Ruegeria pomeroyi (strain ATCC 700808 / DSM 15171 / DSS-3) (Silicibacter pomeroyi).